The chain runs to 101 residues: Small ribosomal subunit protein uS14 (101 aa).

The protein belongs to the universal ribosomal protein uS14 family. As to quaternary structure, part of the 30S ribosomal subunit. Contacts proteins S3 and S10.

Its function is as follows. Binds 16S rRNA, required for the assembly of 30S particles and may also be responsible for determining the conformation of the 16S rRNA at the A site. This Pseudoalteromonas translucida (strain TAC 125) protein is Small ribosomal subunit protein uS14.